Here is a 190-residue protein sequence, read N- to C-terminus: Thiamine biosynthesis protein X (190 aa).

The first 22 residues, 1–22 (MSISRTVFGIAATAALSAALVA), serve as a signal peptide directing secretion. Residue Cys23 is the site of N-palmitoyl cysteine attachment. A lipid anchor (S-diacylglycerol cysteine) is attached at Cys23. The segment at 43-68 (SQNPTSASSTSTSSATTTSSAPVEED) is disordered. Over residues 47–63 (TSASSTSTSSATTTSSA) the composition is skewed to low complexity.

The protein resides in the cell membrane. Is necessary for biosynthesis of the 4-methyl-5-(beta-hydroxyethyl)thiazol component from which thiamine is formed. This Corynebacterium glutamicum (strain ATCC 13032 / DSM 20300 / JCM 1318 / BCRC 11384 / CCUG 27702 / LMG 3730 / NBRC 12168 / NCIMB 10025 / NRRL B-2784 / 534) protein is Thiamine biosynthesis protein X (thiX).